A 234-amino-acid polypeptide reads, in one-letter code: UPF0502 protein Bphy_5360 (234 aa).

This sequence belongs to the UPF0502 family.

The protein is UPF0502 protein Bphy_5360 of Paraburkholderia phymatum (strain DSM 17167 / CIP 108236 / LMG 21445 / STM815) (Burkholderia phymatum).